Reading from the N-terminus, the 1037-residue chain is MEGRNAAAEPFVWVNSASAHSQSVAKAKYEFLFGKSEEKTPDSSDHGGSTLLPPTVTNEFPEYGTMEEGGEGLRASLDFDAKSPPCRLPGQQAVHLLAGQDSILNSVTEGPNDAPQCHPQEQSLQPIDSLISALKATEARIASGTFQATKVLDKDANFSVYQVDKELSTASHKPQRAHRTFPVGPGKSPDIPLSAEVPTEENLSLHIQEDLSALLPEEAQAHRSQITNYRRQGPLRVPESACPVSSSSAGSHNPVDRVGALREQRSDLGREHPRGYDRGGSMGRQGRIKHVEFQGVEILWTGEEAESRHPPERTASPVSKEFAKRPSHSSPACGVCSTSTHLTGDVWDETCKAPSERPGTSAGTLSPMPLGESGEDDVFLRESKEHLEENFAIQGDKERILDQEEHLRGDDDILGPGYTEDSTDVYSSQFETILDNTSLYYSAESLETLYSEPDSYFSFEMPLTPMIQQRIKEGGQFLERTSVGGQHDVLSVSADGGIVMGYSAGITNGLHDSANSVYTRGPQEIAFWGSRDRCFAEGKTTGVDAGSEMGSTDILEKETTESLSNGTNSNVEAAKRLAKRLYHLDRFKRSDVAKHLGKNNEFSKLVAEEYLKFFDFTGMTLDQSLRYFLKAFSLVGETQERERVLIHFSNRYFSCNPDTITSKDGVHCLTCAMMLLNTDLHGHVNIGKKMTCQEFITNLQGVNEGGDFSKDLLKALYNSIKNEKLEWAVDDEEKKKSPSEGTDEKANGTHPKTISRIGSTTNPFLDIPHDPNAAVYKSGFLARKIHADMDGKKTPRGKRGWKTFYAVLKGTVLYLQKDEYKPEKSLSDEDLKNAVSVHHALASKATDYEKKPNVFKLKTADWRVLLFQTQSPEEMQGWINKINCVAAVFSAPPFPAAIGSQKKFSRPLLPATTTKLSQEEQLKSHESKLKQITTELAEHRSYPPDKKVKAKDVDEYKLKDHYLEFEKTRYEIYVSVLKEGGKELLTTDGNEPVGLKKSHSSPSLNPDASPVTAKVKRNVSERKDHRPETPGIKQKVT.

Residues 37-70 (EEKTPDSSDHGGSTLLPPTVTNEFPEYGTMEEGG) are disordered. Residue serine 76 is modified to Phosphoserine. 5 disordered regions span residues 169–189 (TASHKPQRAHRTFPVGPGKSP), 236–255 (RVPESACPVSSSSAGSHNPV), 262–284 (REQRSDLGREHPRGYDRGGSMGR), 304–335 (EAESRHPPERTASPVSKEFAKRPSHSSPACGV), and 353–375 (APSERPGTSAGTLSPMPLGESGE). Positions 237-251 (VPESACPVSSSSAGS) are enriched in low complexity. The segment covering 262–277 (REQRSDLGREHPRGYD) has biased composition (basic and acidic residues). The region spanning 515–723 (NSVYTRGPQE…KALYNSIKNE (209 aa)) is the SEC7 domain. Residues 730–747 (DDEEKKKSPSEGTDEKAN) show a composition bias toward basic and acidic residues. The segment at 730-762 (DDEEKKKSPSEGTDEKANGTHPKTISRIGSTTN) is disordered. Over residues 750–762 (HPKTISRIGSTTN) the composition is skewed to polar residues. Position 759 is a phosphoserine (serine 759). Residues 774 to 887 (AVYKSGFLAR…WINKINCVAA (114 aa)) enclose the PH domain. A coiled-coil region spans residues 911–941 (ATTTKLSQEEQLKSHESKLKQITTELAEHRS). Residues 984-1037 (LLTTDGNEPVGLKKSHSSPSLNPDASPVTAKVKRNVSERKDHRPETPGIKQKVT) are disordered. Residues serine 998, serine 1000, serine 1001, serine 1003, and serine 1009 each carry the phosphoserine modification. Basic and acidic residues predominate over residues 1018-1028 (NVSERKDHRPE).

Ubiquitously expressed, with highest levels in liver. Present in brain, with highest levels in olfactory bulb, cortex, hippocampal pyramidal cell layer and cerebellar granule cell layer (at protein level).

Its subcellular location is the cell membrane. It is found in the cell projection. The protein resides in the ruffle membrane. It localises to the postsynaptic density. In terms of biological role, guanine nucleotide exchange factor for ARF6. The polypeptide is PH and SEC7 domain-containing protein 3 (Psd3) (Mus musculus (Mouse)).